Consider the following 219-residue polypeptide: Ribose-5-phosphate isomerase A (219 aa).

Residues 28–31 (TGST), 81–84 (DGAD), and 94–97 (KGGG) contribute to the substrate site. Catalysis depends on Glu-103, which acts as the Proton acceptor. Lys-121 contributes to the substrate binding site.

It belongs to the ribose 5-phosphate isomerase family. Homodimer.

The enzyme catalyses aldehydo-D-ribose 5-phosphate = D-ribulose 5-phosphate. It functions in the pathway carbohydrate degradation; pentose phosphate pathway; D-ribose 5-phosphate from D-ribulose 5-phosphate (non-oxidative stage): step 1/1. Functionally, catalyzes the reversible conversion of ribose-5-phosphate to ribulose 5-phosphate. This is Ribose-5-phosphate isomerase A from Edwardsiella ictaluri (strain 93-146).